The sequence spans 401 residues: Sorting nexin-4 (401 aa).

The region spanning 17 to 139 (FLQCLVTEPR…AFLENPNWNN (123 aa)) is the PX domain. 4 residues coordinate a 1,2-diacyl-sn-glycero-3-phospho-(1D-myo-inositol-3-phosphate): arginine 60, serine 62, lysine 86, and arginine 105. Phosphoserine is present on serine 62. Residues 190-292 (ISNLEGSIQK…DVEALQEYSA (103 aa)) adopt a coiled-coil conformation.

This sequence belongs to the sorting nexin family.

The protein resides in the cytoplasm. The protein localises to the cytosol. It is found in the preautophagosomal structure membrane. It localises to the endosome membrane. Sorting nexin, involved in the separation or division of vacuoles throughout the entire life cycle of the cells. Involved in retrieval of late-Golgi SNAREs from post-Golgi endosomes to the trans-Golgi network, for cytoplasm to vacuole transport (Cvt), and autophagy of large cargos including mitophagy, pexophagy and glycophagy. This Schizosaccharomyces pombe (strain 972 / ATCC 24843) (Fission yeast) protein is Sorting nexin-4 (snx4).